The primary structure comprises 174 residues: UPF0336 protein MAP_3996c (174 aa).

Residues 11 to 131 enclose the MaoC-like domain; sequence IGSHYRAPDY…VLAEIRSEVT (121 aa).

This sequence belongs to the UPF0336 family.

The polypeptide is UPF0336 protein MAP_3996c (Mycolicibacterium paratuberculosis (strain ATCC BAA-968 / K-10) (Mycobacterium paratuberculosis)).